A 315-amino-acid polypeptide reads, in one-letter code: Neurogenic differentiation factor 4 (315 aa).

Residues 39–71 (ERGSIDGEEDDEEEEDGEKPKKRGPKKKKMTKA) are disordered. The span at 44 to 55 (DGEEDDEEEEDG) shows a compositional bias: acidic residues. Over residues 58-70 (PKKRGPKKKKMTK) the composition is skewed to basic residues. The region spanning 78-130 (VRRVKANARERSRMHGLNDALENLRRVMPCYSKTQKLSKIETLRLARNYIWAL) is the bHLH domain. Serine 89 carries the post-translational modification Phosphoserine.

Efficient DNA binding requires dimerization with another bHLH protein. Forms a heterodimer with the bHLH protein hes2, and weakly interacts with hey1/hrt1. Serine or threonine phosphorylation within the basic region may regulate neurogenic activity. As to expression, first expressed weakly at stage 12 in primary neuronal precursors. At stages 18 and 21, strongly expressed in the cranial ganglions, with weaker expression remaining in the spinal cord. Later, strongly expressed at sites of neuronal differentiation, namely the eye, forebrain and cranial ganglions.

The protein localises to the nucleus. Probably acts as a transcriptional activator. Mediates neuronal differentiation. Required for the regulation of amacrine cell fate specification in the retina. The polypeptide is Neurogenic differentiation factor 4 (neurod4) (Xenopus laevis (African clawed frog)).